Reading from the N-terminus, the 155-residue chain is Microsomal glutathione S-transferase 1 (155 aa).

Topologically, residues 3-9 (DLTQVMD) are lumenal. The helical transmembrane segment at 10-33 (DEVFMAFASYATIILSKMMLMSTA) threads the bilayer. At 34–62 (TAFYRLTRKVFANPEDCVAFGKGENAKKY) the chain is on the cytoplasmic side. Arginine 38 lines the glutathione pocket. An N6-acetyllysine mark is found at lysine 42, lysine 55, and lysine 60. A helical transmembrane segment spans residues 63-96 (LRTDDRVERVRRAHLNDLENIIPFLGIGLLYSLS). Glutathione-binding residues include arginine 73, arginine 74, histidine 76, and glutamate 81. Residues 97 to 99 (GPD) lie on the Lumenal side of the membrane. The chain crosses the membrane as a helical span at residues 100 to 123 (PSTAILHFRLFVGARIYHTIAYLT). Position 121 (tyrosine 121) interacts with glutathione. Over 124-128 (PLPQP) the chain is Cytoplasmic. Residues 129–148 (NRALSFFVGYGVTLSMAYRL) form a helical membrane-spanning segment. Topologically, residues 149–155 (LKSKLYL) are lumenal.

The protein belongs to the MAPEG family. Homotrimer; The trimer binds only one molecule of glutathione. As to expression, highly expressed in liver.

It localises to the endoplasmic reticulum membrane. The protein localises to the mitochondrion outer membrane. The enzyme catalyses RX + glutathione = an S-substituted glutathione + a halide anion + H(+). Its function is as follows. Conjugation of reduced glutathione to a wide number of exogenous and endogenous hydrophobic electrophiles. This Homo sapiens (Human) protein is Microsomal glutathione S-transferase 1 (MGST1).